The following is a 98-amino-acid chain: NADH-ubiquinone oxidoreductase chain 4L (98 aa).

3 consecutive transmembrane segments (helical) span residues 1–21, 29–49, and 61–81; these read MPLI…GMLI, SLLC…LMAL, and VVLL…LVSI.

It belongs to the complex I subunit 4L family. Core subunit of respiratory chain NADH dehydrogenase (Complex I) which is composed of 45 different subunits.

It localises to the mitochondrion inner membrane. The enzyme catalyses a ubiquinone + NADH + 5 H(+)(in) = a ubiquinol + NAD(+) + 4 H(+)(out). Its function is as follows. Core subunit of the mitochondrial membrane respiratory chain NADH dehydrogenase (Complex I) which catalyzes electron transfer from NADH through the respiratory chain, using ubiquinone as an electron acceptor. Part of the enzyme membrane arm which is embedded in the lipid bilayer and involved in proton translocation. This is NADH-ubiquinone oxidoreductase chain 4L (MT-ND4L) from Hylobates lar (Lar gibbon).